The chain runs to 263 residues: Urease accessory protein UreD 1 (263 aa).

It belongs to the UreD family. UreD, UreF and UreG form a complex that acts as a GTP-hydrolysis-dependent molecular chaperone, activating the urease apoprotein by helping to assemble the nickel containing metallocenter of UreC. The UreE protein probably delivers the nickel.

It is found in the cytoplasm. Functionally, required for maturation of urease via the functional incorporation of the urease nickel metallocenter. This chain is Urease accessory protein UreD 1, found in Synechococcus sp. (strain JA-3-3Ab) (Cyanobacteria bacterium Yellowstone A-Prime).